Consider the following 434-residue polypeptide: 3-phosphoshikimate 1-carboxyvinyltransferase (434 aa).

Lys22, Ser23, and Arg27 together coordinate 3-phosphoshikimate. Lys22 contributes to the phosphoenolpyruvate binding site. Phosphoenolpyruvate is bound by residues Gly94 and Arg122. Positions 169, 170, 171, 199, 320, and 347 each coordinate 3-phosphoshikimate. Gln171 is a binding site for phosphoenolpyruvate. Asp320 acts as the Proton acceptor in catalysis. Phosphoenolpyruvate contacts are provided by Arg351, Arg395, and Lys420.

It belongs to the EPSP synthase family. In terms of assembly, monomer.

The protein resides in the cytoplasm. The catalysed reaction is 3-phosphoshikimate + phosphoenolpyruvate = 5-O-(1-carboxyvinyl)-3-phosphoshikimate + phosphate. The protein operates within metabolic intermediate biosynthesis; chorismate biosynthesis; chorismate from D-erythrose 4-phosphate and phosphoenolpyruvate: step 6/7. Functionally, catalyzes the transfer of the enolpyruvyl moiety of phosphoenolpyruvate (PEP) to the 5-hydroxyl of shikimate-3-phosphate (S3P) to produce enolpyruvyl shikimate-3-phosphate and inorganic phosphate. This chain is 3-phosphoshikimate 1-carboxyvinyltransferase, found in Ralstonia pickettii (strain 12J).